The primary structure comprises 287 residues: Nucleotide-binding protein Dtpsy_0831 (287 aa).

Residue 10–17 coordinates ATP; that stretch reads GMSGSGKS. A GTP-binding site is contributed by 59-62; the sequence is DVRS.

The protein belongs to the RapZ-like family.

Functionally, displays ATPase and GTPase activities. The chain is Nucleotide-binding protein Dtpsy_0831 from Acidovorax ebreus (strain TPSY) (Diaphorobacter sp. (strain TPSY)).